A 201-amino-acid chain; its full sequence is MALKYPGGKEYRGNRLNAARQPMAADYANRGMTLEEDLNATNEYYRERGIAVVYKKPTPVQIVRVDYPKRSAAVIKEAYFRQASTTDYNGVYRGKYIDFEAKETKNKTAFPLKNFHAHQIRHMEQVMAHGGICFAILRFSVLNETYLLDAFHLIARWNEQEAGGRKSIPKREIEQYGHYIPLGYQPRIDYISVVEKVYFTV.

Mg(2+)-binding residues include Thr85, Asp87, Glu100, and Gln119.

It belongs to the RecU family. Mg(2+) is required as a cofactor.

The protein localises to the cytoplasm. The catalysed reaction is Endonucleolytic cleavage at a junction such as a reciprocal single-stranded crossover between two homologous DNA duplexes (Holliday junction).. Its function is as follows. Endonuclease that resolves Holliday junction intermediates in genetic recombination. Cleaves mobile four-strand junctions by introducing symmetrical nicks in paired strands. Promotes annealing of linear ssDNA with homologous dsDNA. Required for DNA repair, homologous recombination and chromosome segregation. This Geobacillus thermodenitrificans (strain NG80-2) protein is Holliday junction resolvase RecU.